The primary structure comprises 282 residues: UDP-3-O-acyl-N-acetylglucosamine deacetylase (282 aa).

3 residues coordinate Zn(2+): His74, His226, and Asp230. His253 functions as the Proton donor in the catalytic mechanism.

It belongs to the LpxC family. Zn(2+) serves as cofactor.

The catalysed reaction is a UDP-3-O-[(3R)-3-hydroxyacyl]-N-acetyl-alpha-D-glucosamine + H2O = a UDP-3-O-[(3R)-3-hydroxyacyl]-alpha-D-glucosamine + acetate. Its pathway is glycolipid biosynthesis; lipid IV(A) biosynthesis; lipid IV(A) from (3R)-3-hydroxytetradecanoyl-[acyl-carrier-protein] and UDP-N-acetyl-alpha-D-glucosamine: step 2/6. In terms of biological role, catalyzes the hydrolysis of UDP-3-O-myristoyl-N-acetylglucosamine to form UDP-3-O-myristoylglucosamine and acetate, the committed step in lipid A biosynthesis. This Aquifex aeolicus (strain VF5) protein is UDP-3-O-acyl-N-acetylglucosamine deacetylase.